The primary structure comprises 212 residues: Protein G1-like7 (212 aa).

A compositionally biased stretch (low complexity) spans 1-22 (MDPSGPGPSSAAAGGAPAVAAA). Disordered stretches follow at residues 1–34 (MDPS…RYES) and 148–212 (KARG…PSAS). In terms of domain architecture, ALOG spans 31–158 (RYESQKRRDW…ARGIPYEKKK (128 aa)). The short motif at 156-160 (KKKRK) is the Nuclear localization signal element. Over residues 173–182 (SGSSSAAAAA) the composition is skewed to low complexity. Over residues 183–194 (AGGGDTGSGGGA) the composition is skewed to gly residues.

Belongs to the plant homeotic and developmental regulators ALOG protein family.

The protein resides in the nucleus. Its function is as follows. Probable transcription regulator that acts as a developmental regulator by promoting cell growth in response to light. The protein is Protein G1-like7 of Oryza sativa subsp. indica (Rice).